Reading from the N-terminus, the 21-residue chain is Basic phospholipase A2 BjIV (21 aa).

Belongs to the phospholipase A2 family. Group II subfamily. Can form dimers, trimers and tetramers. Ca(2+) is required as a cofactor. In terms of processing, contains seven disulfide bonds. As to expression, expressed by the venom gland.

It localises to the secreted. The catalysed reaction is a 1,2-diacyl-sn-glycero-3-phosphocholine + H2O = a 1-acyl-sn-glycero-3-phosphocholine + a fatty acid + H(+). Its activity is regulated as follows. Inhibited by crotapotin. Its function is as follows. Snake venom phospholipase A2 has a high enzymatic activity and produces moderate myonecrosis in skeletal muscle, but shows no neuromuscular activity in mouse phrenic nerve-diaphragm preparations. PLA2 catalyzes the calcium-dependent hydrolysis of the 2-acyl groups in 3-sn-phosphoglycerides. The polypeptide is Basic phospholipase A2 BjIV (Bothrops jararacussu (Jararacussu)).